The following is a 37-amino-acid chain: Large ribosomal subunit protein bL36 (37 aa).

It belongs to the bacterial ribosomal protein bL36 family.

The sequence is that of Large ribosomal subunit protein bL36 from Vesicomyosocius okutanii subsp. Calyptogena okutanii (strain HA).